A 70-amino-acid polypeptide reads, in one-letter code: Beta-insect excitatory toxin LqqIT1 (70 aa).

The 64-residue stretch at 2-65 (KNGYAVDSSG…ISDARKKYCD (64 aa)) folds into the LCN-type CS-alpha/beta domain. Intrachain disulfides connect C16/C37, C22/C42, C26/C44, and C38/C64.

The protein belongs to the long (4 C-C) scorpion toxin superfamily. Sodium channel inhibitor family. Beta subfamily. As to expression, expressed by the venom gland.

The protein localises to the secreted. Excitatory insect beta-toxins induce a spastic paralysis. They bind voltage-independently at site-4 of sodium channels (Nav) and shift the voltage of activation toward more negative potentials thereby affecting sodium channel activation and promoting spontaneous and repetitive firing. In vivo, this toxin induces a fast excitatory contraction paralysis on fly larvae. It is active only on insects. This Leiurus quinquestriatus quinquestriatus (Egyptian scorpion) protein is Beta-insect excitatory toxin LqqIT1.